The sequence spans 131 residues: ER membrane protein complex subunit 5 (131 aa).

Topologically, residues 1–3 (MAP) are cytoplasmic. A helical membrane pass occupies residues 4–22 (SLWKGLVGVGLFALAHAAF). Over 23-43 (SAAQHRSYMRLTEKEDESLPI) the chain is Lumenal. Residues 44–63 (DIVLQTLLAFAVTCYGIVHI) form a helical membrane-spanning segment. Residues 64-131 (AGEFKDMDAT…KLRKFDSLRR (68 aa)) lie on the Cytoplasmic side of the membrane. Phosphoserine is present on serine 120.

The protein belongs to the membrane magnesium transporter (TC 1.A.67) family. In terms of assembly, component of the ER membrane protein complex (EMC). In terms of tissue distribution, abundant in heart muscle and kidney with lower levels in liver and brain and very little expression in intestine or colon. In kidney, highest levels in distal convoluted tubule.

The protein resides in the endoplasmic reticulum membrane. It localises to the golgi apparatus membrane. It is found in the early endosome membrane. Its function is as follows. Part of the endoplasmic reticulum membrane protein complex (EMC) that enables the energy-independent insertion into endoplasmic reticulum membranes of newly synthesized membrane proteins. Preferentially accommodates proteins with transmembrane domains that are weakly hydrophobic or contain destabilizing features such as charged and aromatic residues. Involved in the cotranslational insertion of multi-pass membrane proteins in which stop-transfer membrane-anchor sequences become ER membrane spanning helices. It is also required for the post-translational insertion of tail-anchored/TA proteins in endoplasmic reticulum membranes. By mediating the proper cotranslational insertion of N-terminal transmembrane domains in an N-exo topology, with translocated N-terminus in the lumen of the ER, controls the topology of multi-pass membrane proteins like the G protein-coupled receptors. By regulating the insertion of various proteins in membranes, it is indirectly involved in many cellular processes. May be involved Mg(2+) transport. This chain is ER membrane protein complex subunit 5, found in Mus musculus (Mouse).